We begin with the raw amino-acid sequence, 357 residues long: MLTKRRMKFQYISCLAWLAHYDIFHLVPRDKNISYADLARAAGVPEQRLKSILRMAMTSSLFREHPNGTDVGHSAVSALLASDDDAYSYATYMCSKTAPMAMSMTEAHKRWGASTRTNETAYNVAFNTDLPFFDYLAQNKARMDEFARYMRSVRSSETVALKHLISGVDWESIPAGGMLVDVGGSTGGAAIALAQAYPHIRFTVQDLPENVETGEKAAAASLPADIASRLTFQAHDFTLPQPVRAADAYLLRMILHDWPDEQAVKILRNIVTAMDETKSRLFIMDTVLPKPGSVPISVERIARARDLTMIQSFNSKERELDEWKDLITAADPRLQLIGVTQPFGSAMSILEIQLSAK.

S-adenosyl-L-methionine is bound at residue aspartate 206. The Proton acceptor role is filled by histidine 256.

This sequence belongs to the class I-like SAM-binding methyltransferase superfamily. Cation-independent O-methyltransferase family.

It functions in the pathway pigment biosynthesis. The protein operates within secondary metabolite biosynthesis. O-methyltransferase; part of the gene cluster that mediates the biosynthesis of pleosporalin A, ascomycone A, as well as a third cryptic naphthoquinone derived pigment, all responsible for the coloration of conidia. Specifically methylates position C-6 of the pgmA product 3-acetonyl-1,6,8-trihydroxy-2-naphthaldehyde to yield fusarubinaldehyde. The pathway begins with the biosynthesis of the cyclized heptaketide 3-acetonyl-1,6,8-trihydroxy-2-naphthaldehyde by the NR-PKS pgmA. The C-6 hydroxyl group is further methylated by the O-methyltransferase pgmB to yield fusarubinaldehyde which is in turn oxidized by the cytochrome P450 monooxygenase pgmC at C-9. The C-1 hydroxyl group is then methylated spontaneously. Although pgmE, pgmD and pgmH are essential for the production of pleosporalin A, it is not the case for the 2 other final products and it remains difficult to assign a specific function to each enzyme. PgmF and pgmG seem not to be involved in pigment biosynthesis although they were regulated by the cluster-specific transcription factor pgmR. The sequence is that of O-methyltransferase pgmB from Aspergillus terreus (strain NIH 2624 / FGSC A1156).